A 689-amino-acid chain; its full sequence is Glycine--tRNA ligase beta subunit (689 aa).

It belongs to the class-II aminoacyl-tRNA synthetase family. In terms of assembly, tetramer of two alpha and two beta subunits.

The protein resides in the cytoplasm. It carries out the reaction tRNA(Gly) + glycine + ATP = glycyl-tRNA(Gly) + AMP + diphosphate. This is Glycine--tRNA ligase beta subunit from Actinobacillus pleuropneumoniae serotype 3 (strain JL03).